Consider the following 97-residue polypeptide: Biogenesis of lysosome-related organelles complex 1 subunit SNN1 (97 aa).

A coiled-coil region spans residues 45 to 97 (VVRLKQIRNLLKEEQEYYNEEEGLGVERERLEELELRVEKLTQKYKKLLADCV).

This sequence belongs to the SNAPIN family. In terms of assembly, component of the biogenesis of lysosome-related organelles complex-1 (BLOC-1).

It localises to the endosome. In terms of biological role, component of the biogenesis of lysosome-related organelles complex-1 (BLOC-1), a complex involved in endosomal cargo sorting. The protein is Biogenesis of lysosome-related organelles complex 1 subunit SNN1 (SNN1) of Lachancea thermotolerans (strain ATCC 56472 / CBS 6340 / NRRL Y-8284) (Yeast).